We begin with the raw amino-acid sequence, 317 residues long: MDQVSRSLPPPFLSRDLHLHPHHQFQHQQQQQQQNHGHDIDQHRIGGLKRDRDADIDPNEHSSAGKDQSTPGSGGESGGGGGGDNHITRRPRGRPAGSKNKPKPPIIITRDSANALKSHVMEVANGCDVMESVTVFARRRQRGICVLSGNGAVTNVTIRQPASVPGGGSSVVNLHGRFEILSLSGSFLPPPAPPAASGLTIYLAGGQGQVVGGSVVGPLMASGPVVIMAASFGNAAYERLPLEEDDQEEQTAGAVANNIDGNATMGGGTQTQTQTQQQQQQQLMQDPTSFIQGLPPNLMNSVQLPAEAYWGTPRPSF.

Disordered stretches follow at residues 22–41 and 48–106; these read HHQFQHQQQQQQQNHGHDID and LKRD…KPPI. Residues 26–35 are compositionally biased toward low complexity; that stretch reads QHQQQQQQQN. The segment covering 48 to 64 has biased composition (basic and acidic residues); sequence LKRDRDADIDPNEHSSA. Gly residues predominate over residues 72–84; it reads GSGGESGGGGGGD. The a.T hook DNA-binding region spans 89-101; sequence RRPRGRPAGSKNK. Residues 113–253 form the PPC domain; that stretch reads ANALKSHVME…EDDQEEQTAG (141 aa). The segment at 258 to 285 is disordered; sequence NIDGNATMGGGTQTQTQTQQQQQQQLMQ. Over residues 270-282 the composition is skewed to low complexity; the sequence is QTQTQTQQQQQQQ.

Homodimer. Interacts with HDA1/HDA19, HDA6 and HDA9. In terms of tissue distribution, expressed at the hypocotyl-root transition zone and the root hair zone. Also detected in the inflorescence.

Its subcellular location is the nucleus. In terms of biological role, transcription factor that specifically binds AT-rich DNA sequences related to the nuclear matrix attachment regions (MARs). Binds an AT-rich DNA sequences in the FLOWERING LOCUS T (FT) promoter. Acts redundantly with AHL18, AHL27 and AHL29 in the regulation of flowering and regulation of the hypocotyl elongation. Plays a role in both photo- and skotomorphogenesis. Acts as a chromatin remodeling factor that modifies the architecture of FLOWERING LOCUS T (FT) chromatin by modulating both H3 acetylation and methylation leading to the regulation of FT expression during flowering induction. This chain is AT-hook motif nuclear-localized protein 22, found in Arabidopsis thaliana (Mouse-ear cress).